Reading from the N-terminus, the 278-residue chain is Shikimate dehydrogenase (NADP(+)) (278 aa).

Residues 18 to 20 (SKS) and threonine 65 contribute to the shikimate site. Lysine 69 serves as the catalytic Proton acceptor. Glutamate 81 is a binding site for NADP(+). Positions 90 and 106 each coordinate shikimate. Residues 130–134 (GAGGA) and 154–159 (NRTFAK) each bind NADP(+). Tyrosine 223 lines the shikimate pocket. Residue glycine 241 participates in NADP(+) binding.

The protein belongs to the shikimate dehydrogenase family. Homodimer.

It catalyses the reaction shikimate + NADP(+) = 3-dehydroshikimate + NADPH + H(+). It participates in metabolic intermediate biosynthesis; chorismate biosynthesis; chorismate from D-erythrose 4-phosphate and phosphoenolpyruvate: step 4/7. Functionally, involved in the biosynthesis of the chorismate, which leads to the biosynthesis of aromatic amino acids. Catalyzes the reversible NADPH linked reduction of 3-dehydroshikimate (DHSA) to yield shikimate (SA). In Vibrio cholerae serotype O1 (strain ATCC 39541 / Classical Ogawa 395 / O395), this protein is Shikimate dehydrogenase (NADP(+)).